Consider the following 209-residue polypeptide: Nucleoside triphosphate pyrophosphatase (209 aa).

Asp79 (proton acceptor) is an active-site residue.

This sequence belongs to the Maf family. The cofactor is a divalent metal cation.

It localises to the cytoplasm. The enzyme catalyses a ribonucleoside 5'-triphosphate + H2O = a ribonucleoside 5'-phosphate + diphosphate + H(+). It catalyses the reaction a 2'-deoxyribonucleoside 5'-triphosphate + H2O = a 2'-deoxyribonucleoside 5'-phosphate + diphosphate + H(+). In terms of biological role, nucleoside triphosphate pyrophosphatase. May have a dual role in cell division arrest and in preventing the incorporation of modified nucleotides into cellular nucleic acids. The protein is Nucleoside triphosphate pyrophosphatase of Mycolicibacterium vanbaalenii (strain DSM 7251 / JCM 13017 / BCRC 16820 / KCTC 9966 / NRRL B-24157 / PYR-1) (Mycobacterium vanbaalenii).